The chain runs to 363 residues: tRNA/tmRNA (uracil-C(5))-methyltransferase (363 aa).

The S-adenosyl-L-methionine site is built by Gln-187, Tyr-215, Asn-220, Glu-236, and Asp-296. Cys-321 acts as the Nucleophile in catalysis. The Proton acceptor role is filled by Glu-355.

It belongs to the class I-like SAM-binding methyltransferase superfamily. RNA M5U methyltransferase family. TrmA subfamily.

It catalyses the reaction uridine(54) in tRNA + S-adenosyl-L-methionine = 5-methyluridine(54) in tRNA + S-adenosyl-L-homocysteine + H(+). It carries out the reaction uridine(341) in tmRNA + S-adenosyl-L-methionine = 5-methyluridine(341) in tmRNA + S-adenosyl-L-homocysteine + H(+). Functionally, dual-specificity methyltransferase that catalyzes the formation of 5-methyluridine at position 54 (m5U54) in all tRNAs, and that of position 341 (m5U341) in tmRNA (transfer-mRNA). The protein is tRNA/tmRNA (uracil-C(5))-methyltransferase of Haemophilus influenzae (strain PittEE).